Here is a 461-residue protein sequence, read N- to C-terminus: MYGRTRVSAALAASRPGEELVLKGWVRTVRVGKDVTFLAINDGSCMTSLQVVVEPALPNYQDVCRIGTGSAVAVRGILRESPAAGQKYELAAEELEIIGPADDSYPLQKKRHSFEYLRTIAHLRPRTNTFGAVFRVRSSLAQAVHRFFAERGFLYVHTPIITANDCEGAGELFRVTTLDMARPPLAAGEVDYSGDFFAQATGLTVSGQLEGELFAQAFSDIYTFGPTFRAENSNTARHAAEFWMIEPELAFADLMADAALAEDFLKFLCRHVLDNCGEDMAFFNEQIDKGLLERVRAVADSSFAVMEYTEAITHLKKAKVPFAFPVEWGLDLQSEHERYITEKVVGGPVFLVNYPKDIKAFYMRQNDDGKTVAAMDLLVPKVGEIIGGSQREERLDLLLERMAQMGINEDGLWWYLDSRRWGSCPHAGFGLGFERLLMYLTGMENIRDVIPFPRTPRHAEF.

Belongs to the class-II aminoacyl-tRNA synthetase family. In terms of assembly, homodimer.

The protein resides in the cytoplasm. It catalyses the reaction tRNA(Asn) + L-asparagine + ATP = L-asparaginyl-tRNA(Asn) + AMP + diphosphate + H(+). This chain is Asparagine--tRNA ligase, found in Geotalea uraniireducens (strain Rf4) (Geobacter uraniireducens).